We begin with the raw amino-acid sequence, 508 residues long: Mevalonate kinase ERG12 (508 aa).

The segment at 1–46 (MPPSNPAMVNGLNGSHANGNGNGHNHISDSGSETSGESSNGSGRRR) is disordered. The segment covering 10–42 (NGLNGSHANGNGNGHNHISDSGSETSGESSNGS) has biased composition (low complexity). Residues Lys-68, Ser-200, and 205–211 (GAGLGSS) each bind ATP. Positions 211 and 256 each coordinate Mg(2+). Asp-267 acts as the Proton acceptor in catalysis.

It belongs to the GHMP kinase family. Mevalonate kinase subfamily. In terms of assembly, homodimer. Mg(2+) serves as cofactor.

The protein resides in the cytoplasm. Its subcellular location is the cytosol. The catalysed reaction is (R)-mevalonate + ATP = (R)-5-phosphomevalonate + ADP + H(+). It functions in the pathway isoprenoid biosynthesis; isopentenyl diphosphate biosynthesis via mevalonate pathway; isopentenyl diphosphate from (R)-mevalonate: step 1/3. Its function is as follows. Mevalonate kinase; part of the second module of ergosterol biosynthesis pathway that includes the middle steps of the pathway. ERG12 converts mevalonate into 5-phosphomevalonate. The second module is carried out in the vacuole and involves the formation of farnesyl diphosphate, which is also an important intermediate in the biosynthesis of ubiquinone, dolichol, heme and prenylated proteins. Activity by the mevalonate kinase ERG12 (FG05912) first converts mevalonate into 5-phosphomevalonate. 5-phosphomevalonate is then further converted to 5-diphosphomevalonate by the phosphomevalonate kinase ERG8 (FG09764). The diphosphomevalonate decarboxylase ERG19 (FG10424) then produces isopentenyl diphosphate. The isopentenyl-diphosphate delta-isomerase IDI1 (FG09722) then catalyzes the 1,3-allylic rearrangement of the homoallylic substrate isopentenyl (IPP) to its highly electrophilic allylic isomer, dimethylallyl diphosphate (DMAPP). Finally the farnesyl diphosphate synthase ERG20 (FG06784) catalyzes the sequential condensation of isopentenyl pyrophosphate with dimethylallyl pyrophosphate, and then with the resultant geranylpyrophosphate to the ultimate product farnesyl pyrophosphate. This chain is Mevalonate kinase ERG12, found in Gibberella zeae (strain ATCC MYA-4620 / CBS 123657 / FGSC 9075 / NRRL 31084 / PH-1) (Wheat head blight fungus).